A 295-amino-acid polypeptide reads, in one-letter code: Virginiamycin B lyase (295 aa).

Histidine 227 provides a ligand contact to substrate. Glutamate 267 is a Mg(2+) binding site. The active-site Proton acceptor is the histidine 269. Glutamate 284 is a binding site for Mg(2+).

Belongs to the Vgb family. In terms of assembly, monomer. The cofactor is Mg(2+).

Inactivates the type B streptogramin antibiotics by linearizing the lactone ring at the ester linkage, generating a free phenylglycine carboxylate and converting the threonyl moiety into 2-amino-butenoic acid. The protein is Virginiamycin B lyase of Bacillus licheniformis (strain ATCC 14580 / DSM 13 / JCM 2505 / CCUG 7422 / NBRC 12200 / NCIMB 9375 / NCTC 10341 / NRRL NRS-1264 / Gibson 46).